Consider the following 277-residue polypeptide: Large ribosomal subunit protein uL2 (277 aa).

Residues 219-277 (RPQTRGSAMNPVDHPHGGGEGKKNSGRHPVTPWGKPTKGAKTRRKKASDKLIISRRKGK) are disordered. Residues 231–241 (DHPHGGGEGKK) show a composition bias toward basic and acidic residues. Residues 256–277 (KGAKTRRKKASDKLIISRRKGK) show a composition bias toward basic residues.

This sequence belongs to the universal ribosomal protein uL2 family. In terms of assembly, part of the 50S ribosomal subunit. Forms a bridge to the 30S subunit in the 70S ribosome.

In terms of biological role, one of the primary rRNA binding proteins. Required for association of the 30S and 50S subunits to form the 70S ribosome, for tRNA binding and peptide bond formation. It has been suggested to have peptidyltransferase activity; this is somewhat controversial. Makes several contacts with the 16S rRNA in the 70S ribosome. The protein is Large ribosomal subunit protein uL2 of Campylobacter concisus (strain 13826).